Here is a 226-residue protein sequence, read N- to C-terminus: Gap junction beta-2 protein (226 aa).

An intramembrane segment occupies 2–13; that stretch reads DWGALQTILGGV. Topologically, residues 14 to 20 are cytoplasmic; sequence NKHSTSI. Residues 21–40 traverse the membrane as a helical segment; sequence GKIWLTVLFIFRIMILVVAA. Residues 41-73 are Extracellular-facing; that stretch reads KEVWGDEQADFVCNTLQPGCKNVCYDHYFPISH. Residues Glu42, Gly45, and Glu47 each coordinate Ca(2+). 3 cysteine pairs are disulfide-bonded: Cys53–Cys180, Cys60–Cys174, and Cys64–Cys169. A helical transmembrane segment spans residues 74–94; the sequence is IRLWALQLIFVSTPALLVAMH. Residues 95-135 lie on the Cytoplasmic side of the membrane; sequence VAYRRHEKKRKFIKGEIKSEFKDIEEIKTQKVRIEGSLWWT. Residues 136 to 156 form a helical membrane-spanning segment; the sequence is YTSSIFFRVIFEAAFMYVFYV. The Extracellular segment spans residues 157 to 189; it reads MYDGFSMQRLVKCNAWPCPNTVDCFVSRPTEKT. The helical transmembrane segment at 190 to 210 threads the bilayer; that stretch reads VFTVFMIAVSGICILLNVTEL. The Cytoplasmic segment spans residues 211 to 226; the sequence is CYLLIRYCSGRSKKPV.

It belongs to the connexin family. Beta-type (group I) subfamily. A hemichannel or connexon is composed of a hexamer of connexins. A functional gap junction is formed by the apposition of two hemichannels. Forms heteromeric channels with GJB4. Interacts with CNST.

It localises to the cell membrane. Its subcellular location is the cell junction. The protein resides in the gap junction. Its function is as follows. Structural component of gap junctions. Gap junctions are dodecameric channels that connect the cytoplasm of adjoining cells. They are formed by the docking of two hexameric hemichannels, one from each cell membrane. Small molecules and ions diffuse from one cell to a neighboring cell via the central pore. The chain is Gap junction beta-2 protein (GJB2) from Pongo pygmaeus (Bornean orangutan).